The chain runs to 192 residues: Ras-like protein 2 (192 aa).

GTP is bound at residue 12–19 (GGGGVGKS). An Effector region motif is present at residues 34-42 (YDPTIEDSY). Residue Cys46 is the site of S-palmitoyl cysteine attachment. Residues 59-63 (DTAGQ) and 118-121 (NKCD) contribute to the GTP site. 2 S-palmitoyl cysteine lipidation sites follow: Cys120 and Cys147. Cysteine methyl ester is present on Cys189. A lipid anchor (S-farnesyl cysteine) is attached at Cys189. The propeptide at 190–192 (CLM) is removed in mature form.

The protein belongs to the small GTPase superfamily. Ras family. As to quaternary structure, interacts with hzg.

The protein resides in the cell membrane. It carries out the reaction GTP + H2O = GDP + phosphate + H(+). Its activity is regulated as follows. Alternates between an inactive form bound to GDP and an active form bound to GTP. Activated by a guanine nucleotide-exchange factor (GEF) and inactivated by a GTPase-activating protein (GAP). May be involved in endocytic processes and/or other transport pathways mediated by vesicle trafficking. May interact functionally with ROP protein. Ras proteins bind GDP/GTP and possess intrinsic GTPase activity. The sequence is that of Ras-like protein 2 (Ras64B) from Drosophila melanogaster (Fruit fly).